The chain runs to 771 residues: Rho guanine nucleotide exchange factor 6 (771 aa).

Residues 1–111 (MNPEERLVTW…TLLAVNKATE (111 aa)) enclose the Calponin-homology (CH) domain. A disordered region spans residues 115 to 157 (SERPCGRSSSLSAATSSQTNPQVAVPSTAPEQHSEEKAEMTEN). Positions 122-131 (SSSLSAATSS) are enriched in low complexity. Phosphoserine is present on Ser-126. A Phosphothreonine modification is found at Thr-133. Residues 159 to 218 (SHQLIVKARFNFKQTNEDELSVCKGDIIYVTRVEEGGWWEGTLNGRTGWFPSNYVREIKP) enclose the SH3 domain. Phosphoserine is present on Ser-224. The DH domain occupies 240–420 (YYTVVLQNIL…KTLMGQCQDL (181 aa)). Residues 442–547 (DIKTLGNVIF…WMEQLNRLTK (106 aa)) enclose the PH domain. Ser-487 bears the Phosphoserine mark. The segment covering 556 to 572 (SKTSSSSCSTHSSFSST) has biased composition (low complexity). Residues 556–580 (SKTSSSSCSTHSSFSSTGQPRGPLE) form a disordered region. A phosphoserine mark is found at Ser-639 and Ser-679.

Interacts with PAK kinases through the SH3 domain. Interacts with GIT1. Component of cytoplasmic complexes, which also contain PXN, GIT1 and PAK1. Interacts with BIN2. Identified in a complex with BIN2 and GIT2. Interacts with PARVB. Interacts with PARVG; the guanine nucleotide exchange factor activity of ARHGEF6 is essential for PARVG-induced enhancement of cell spreading. As to expression, detected in adult heart, spleen, lung, skeletal muscle, kidney and testis. Detected throughout embryogenesis.

The protein localises to the cell projection. It is found in the lamellipodium. Acts as a RAC1 guanine nucleotide exchange factor (GEF). In Mus musculus (Mouse), this protein is Rho guanine nucleotide exchange factor 6 (Arhgef6).